Reading from the N-terminus, the 219-residue chain is Small ribosomal subunit protein uS3 (219 aa).

The 70-residue stretch at 39–108 folds into the KH type-2 domain; the sequence is IKEFIKKNYF…KVTVKVQEIK (70 aa).

The protein belongs to the universal ribosomal protein uS3 family. Part of the 30S ribosomal subunit. Forms a tight complex with proteins S10 and S14.

Binds the lower part of the 30S subunit head. Binds mRNA in the 70S ribosome, positioning it for translation. This Fusobacterium nucleatum subsp. nucleatum (strain ATCC 25586 / DSM 15643 / BCRC 10681 / CIP 101130 / JCM 8532 / KCTC 2640 / LMG 13131 / VPI 4355) protein is Small ribosomal subunit protein uS3.